The sequence spans 125 residues: Probable mercury resistance operon repressor (125 aa).

The region spanning 15 to 109 (VPCTHPDTTA…LARCLAADNA (95 aa)) is the HTH arsR-type domain. Positions 49 to 68 (SAECVEHAGISQPRVSVHLS) form a DNA-binding region, H-T-H motif. The Hg(2+) site is built by Cys69, Cys73, and Cys114.

In terms of biological role, negatively regulates the mercuric reductase merA and the organolyase merB in the absence of mercuric ions. The protein is Probable mercury resistance operon repressor (merR) of Streptomyces lividans.